The sequence spans 445 residues: Cytochrome b (445 aa).

Residues 2 to 49 (SGIPHDHYEPRTGIEKWLHSRLPIVALAYDTIMIPTPRNLNWMWIWGV) are Cytoplasmic-facing. Residues 50-67 (VLAFCLVLQIVTGIVLAM) form a helical membrane-spanning segment. Over 68–94 (HYTPHVDLAFASVEHIMRNVNGGFMLR) the chain is Periplasmic. The helical transmembrane segment at 95–113 (YLHANGASLFFIAVYLHIF) threads the bilayer. Heme b-binding residues include H97 and H111. Residues 114-129 (RGLYYGSYKAPREVTW) are Cytoplasmic-facing. Residues 130 to 149 (IVGMLIYLAMMATAFMGYVL) form a helical membrane-spanning segment. The Periplasmic segment spans residues 150-193 (PWGQMSFWGATVITGLFGAIPGIGHSIQTWLLGGPAVDNATLNR). Residues 194–216 (FFSLHYLLPFVIAALVAIHIWAF) traverse the membrane as a helical segment. H198 and H212 together coordinate heme b. The Cytoplasmic portion of the chain corresponds to 217-252 (HSTGNNNPTGVEVRRTSKAEAQKDTVPFWPYFIIKD). A helical membrane pass occupies residues 253–270 (VFALAVVLLVFFAIVGFM). Residues 271–329 (PNYLGHPDNYIEANPLSTPAHIVPEWYFLPFYAILRAFTADVWVVQIANFISFGIIDAK) are Periplasmic-facing. Residues 330–346 (FFGVLAMFGAILVMALV) form a helical membrane-spanning segment. The Cytoplasmic segment spans residues 347-364 (PWLDTSPVRSGRYRPMFK). A helical transmembrane segment spans residues 365-382 (IYFWLLAADFVILTWVGA). At 383–388 (QQTTFP) the chain is on the periplasmic side. Residues 389–408 (YDWISLIASAYWFAYFLVIL) form a helical membrane-spanning segment. The Cytoplasmic segment spans residues 409 to 445 (PILGAIEKPVAPPATIEEDFNAHYSPATGGTKTVVAE).

The protein belongs to the cytochrome b family. The main subunits of complex b-c1 are: cytochrome b, cytochrome c1 and the Rieske protein. Heme b serves as cofactor.

Its subcellular location is the cell membrane. Its function is as follows. Component of the ubiquinol-cytochrome c reductase complex (complex III or cytochrome b-c1 complex), which is a respiratory chain that generates an electrochemical potential coupled to ATP synthesis. The chain is Cytochrome b (petB) from Cereibacter sphaeroides (Rhodobacter sphaeroides).